The chain runs to 198 residues: Methyl-coenzyme M reductase I operon protein C (198 aa).

MCR is composed of three subunits: alpha, beta, and gamma. The function of proteins C and D is not known.

This Methanothermobacter marburgensis (strain ATCC BAA-927 / DSM 2133 / JCM 14651 / NBRC 100331 / OCM 82 / Marburg) (Methanobacterium thermoautotrophicum) protein is Methyl-coenzyme M reductase I operon protein C (mcrC).